The sequence spans 214 residues: Adenylate kinase (214 aa).

ATP is bound at residue 10–15 (GAGKGT). The interval 30-59 (STGDMLRAAVKSGSELGKQAKDIMDAGKLV) is NMP. Residues T31, R36, 57-59 (KLV), 85-88 (GFPR), and Q92 each bind AMP. Residues 122-159 (GRRVHAPSGRVYHVKFNPPKVEGKDDVTGEELTTRKDD) form an LID region. ATP is bound by residues R123 and 132-133 (VY). AMP is bound by residues R156 and R167. K192 is modified (N6-acetyllysine). K200 is an ATP binding site.

The protein belongs to the adenylate kinase family. As to quaternary structure, monomer.

It is found in the cytoplasm. The enzyme catalyses AMP + ATP = 2 ADP. The protein operates within purine metabolism; AMP biosynthesis via salvage pathway; AMP from ADP: step 1/1. In terms of biological role, catalyzes the reversible transfer of the terminal phosphate group between ATP and AMP. Plays an important role in cellular energy homeostasis and in adenine nucleotide metabolism. The chain is Adenylate kinase from Escherichia coli O8 (strain IAI1).